A 94-amino-acid polypeptide reads, in one-letter code: MFRSDKAEKMDKRRRRQSKAKASCSEEVSSIEWEAVKMSEEEEDLISRMYKLVGDRWELIAGRIPGRTPEEIERYWLMKHGVVFANRRRDFFRK.

The segment at 1–10 (MFRSDKAEKM) is S1, required for cell-to-cell movements. The segment covering 1–11 (MFRSDKAEKMD) has biased composition (basic and acidic residues). A disordered region spans residues 1–25 (MFRSDKAEKMDKRRRRQSKAKASCS). One can recognise a Myb-like domain in the interval 30–80 (SIEWEAVKMSEEEEDLISRMYKLVGDRWELIAGRIPGRTPEEIERYWLMKH). The S2, required for cell-to-cell movements and nuclear localization stretch occupies residues 76–79 (WLMK).

As to quaternary structure, interacts with GL3 and BHLH2. Interacts with SIEL. In terms of tissue distribution, expressed in trichomes and in young developing leaves, as well as in root hair and stele cells (pericycle and vascular tissues). Expressed in epidermal root hairless cells (atrichoblasts) and moves to root hair cells (trichoblasts) by a cell-to-cell movement through plasmodesmata (at protein level).

The protein resides in the nucleus. Its function is as follows. Transcription factor. Determines the fate of epidermal cell differentiation. Represses trichome development by lateral inhibition. Together with GL3 or BHLH2, promotes the formation of hair developing cells (H position) in root epidermis, probably by inhibiting non-hair cell formation. Represses the expression of GL2 and WER in H cells. Positively regulates stomatal formation in the hypocotyl. This is Transcription factor CPC (CPC) from Arabidopsis thaliana (Mouse-ear cress).